A 562-amino-acid chain; its full sequence is Protein TBF1 (562 aa).

Positions 376 to 414 (ASMSNSSSGPHSSHNNSSNSNNNGSIGLRKPKAKRTWSK) are disordered. A compositionally biased stretch (low complexity) spans 377–400 (SMSNSSSGPHSSHNNSSNSNNNGS). Residues 404-460 (RKPKAKRTWSKEEEEALVEGLKEVGPSWSKILDLYGPGGKITENLKNRTQVQLKDKA) form the HTH myb-type domain. Positions 431-456 (WSKILDLYGPGGKITENLKNRTQVQL) form a DNA-binding region, H-T-H motif. The interval 495-562 (FSQSPNSSTI…GFDPHLEDGM (68 aa)) is disordered. Composition is skewed to polar residues over residues 496 to 522 (SQSPNSSTIMEQNLSQHPSSAASATED) and 532 to 552 (GQNSDNMPSNGLFGNSTSDNT).

Homodimer.

The protein resides in the nucleus. Its subcellular location is the chromosome. It is found in the telomere. In terms of biological role, binds the telomeric double-stranded TTAGGG repeat and negatively regulates telomere length. Involved in the regulation of gene expression. 52 binding sites have been identified, distributed over 15 chromosomes. A member of the general regulatory factors (GRFs) which act as genome partitioners. Acts as a chromatin insulator which are known as STARs (Subtelomeric anti-silencing region). STARs prevent negative or positive transcription influence by extending across chromatin to a promoter. This chain is Protein TBF1 (TBF1), found in Saccharomyces cerevisiae (strain ATCC 204508 / S288c) (Baker's yeast).